The following is a 253-amino-acid chain: MGKIIAITNQKGGVGKTTTSVNLGACLAYIGKRVLLVDIDPQGNATSGLGIEKADVEQCVYDILVDDADVIDIIKATTVENLDVIPATIQLAGAEIELVPTISREVRLKRALEAVKQNYDYIIIDCPPSLGLLTINALTASDSVVIPVQCEYYALEGLSQLLNTVRLVQKHLNTDLMIEGVLLTMLDARTNLGIQVIEEVKKYFRDKVYKTVIPRNVRLSEAPSHGKPIILYDPRSRGAEVYLDLAKEVAANG.

ATP contacts are provided by Lys-11, Gly-12, Gly-13, Val-14, Gly-15, Lys-16, Thr-17, Thr-18, Pro-214, and Asn-216. A Mg(2+)-binding site is contributed by Thr-17.

Belongs to the ParA family. As to quaternary structure, dimerizes in the presence of ATP but not ADP; ATP-binding is required for double-stranded (ds)DNA-binding. Interacts with DnaA.

It localises to the cytoplasm. It catalyses the reaction ATP + H2O = ADP + phosphate + H(+). Its function is as follows. Acts as a spatially regulated molecular switch, capable of either inhibiting or activating the ability of DnaA to initiate DNA replication. Monomeric ADP-Soj inhibits oligomerization of DnaA on single-stranded (ss)- or double-stranded (ds)DNA, thus inhibiting DNA replication initiation; does not disassemble premade DnaA-DNA filaments. Decreases the residence time of DnaA on the chromosome at its binding sites (oriC, replication forks and (probably) promoter-binding sites). Soj forms nucleoprotein filaments in an ATP- and DNA-dependent manner. Inhibits the initiation of sporulation, Spo0J antagonizes this inhibition. Soj ultimately inhibits the activation (phosphorylation) of Spo0A. In Bacillus subtilis (strain 168), this protein is Sporulation initiation inhibitor protein Soj.